Here is a 159-residue protein sequence, read N- to C-terminus: Putative ribosomal RNA large subunit methyltransferase H (159 aa).

S-adenosyl-L-methionine is bound by residues L76, G108, and 127-132 (FSKMTF).

The protein belongs to the RNA methyltransferase RlmH family.

The protein resides in the cytoplasm. The catalysed reaction is pseudouridine(1915) in 23S rRNA + S-adenosyl-L-methionine = N(3)-methylpseudouridine(1915) in 23S rRNA + S-adenosyl-L-homocysteine + H(+). Its function is as follows. Specifically methylates the pseudouridine at position 1915 (m3Psi1915) in 23S rRNA. This chain is Putative ribosomal RNA large subunit methyltransferase H, found in Methanococcus maripaludis (strain C6 / ATCC BAA-1332).